The chain runs to 171 residues: 3-hydroxydecanoyl-[acyl-carrier-protein] dehydratase (171 aa).

The active site involves His-70.

It belongs to the thioester dehydratase family. FabA subfamily. Homodimer.

It localises to the cytoplasm. It carries out the reaction a (3R)-hydroxyacyl-[ACP] = a (2E)-enoyl-[ACP] + H2O. It catalyses the reaction (3R)-hydroxydecanoyl-[ACP] = (2E)-decenoyl-[ACP] + H2O. The catalysed reaction is (2E)-decenoyl-[ACP] = (3Z)-decenoyl-[ACP]. It functions in the pathway lipid metabolism; fatty acid biosynthesis. Its function is as follows. Necessary for the introduction of cis unsaturation into fatty acids. Catalyzes the dehydration of (3R)-3-hydroxydecanoyl-ACP to E-(2)-decenoyl-ACP and then its isomerization to Z-(3)-decenoyl-ACP. Can catalyze the dehydratase reaction for beta-hydroxyacyl-ACPs with saturated chain lengths up to 16:0, being most active on intermediate chain length. The sequence is that of 3-hydroxydecanoyl-[acyl-carrier-protein] dehydratase from Chromohalobacter salexigens (strain ATCC BAA-138 / DSM 3043 / CIP 106854 / NCIMB 13768 / 1H11).